Here is a 126-residue protein sequence, read N- to C-terminus: Histone H2B (126 aa).

Positions 1–12 (MPEPAKSAPAAK) are enriched in low complexity. The tract at residues 1–35 (MPEPAKSAPAAKKGSKKAVSKVQKKDGKKRRKSRK) is disordered. Residues Lys6 and Lys13 each carry the N6-acetyllysine modification. Ser15 carries the phosphoserine modification. Residues Lys16 and Lys21 each carry the N6-acetyllysine modification. Ser113 carries O-linked (GlcNAc) serine glycosylation. Lys121 participates in a covalent cross-link: Glycyl lysine isopeptide (Lys-Gly) (interchain with G-Cter in ubiquitin).

The protein belongs to the histone H2B family. As to quaternary structure, the nucleosome is a histone octamer containing two molecules each of H2A, H2B, H3 and H4 assembled in one H3-H4 heterotetramer and two H2A-H2B heterodimers. The octamer wraps approximately 147 bp of DNA. Post-translationally, monoubiquitination of Lys-121 by BRE1 gives a specific tag for epigenetic transcriptional activation and is also prerequisite for histone H3 'Lys-4' and 'Lys-79' methylation. Phosphorylated on Ser-15 during apoptosis; which facilitates apoptotic chromatin condensation. In terms of processing, glcNAcylation at Ser-113 promotes monoubiquitination of Lys-121. It fluctuates in response to extracellular glucose, and associates with transcribed genes. Expressed by the skin granular glands.

It localises to the nucleus. The protein resides in the secreted. Its subcellular location is the chromosome. Its function is as follows. Core component of nucleosome. Nucleosomes wrap and compact DNA into chromatin, limiting DNA accessibility to the cellular machineries which require DNA as a template. Histones thereby play a central role in transcription regulation, DNA repair, DNA replication and chromosomal stability. DNA accessibility is regulated via a complex set of post-translational modifications of histones, also called histone code, and nucleosome remodeling. Functionally, has antibacterial activity against the Gram-negative bacteria E.coli and the Gram-positive bacteria S.aureus. The protein is Histone H2B of Zhangixalus schlegelii (Japanese gliding frog).